A 364-amino-acid chain; its full sequence is DNA polymerase IV (364 aa).

The 185-residue stretch at 14 to 198 folds into the UmuC domain; that stretch reads IIHIDMDAFF…LPIEKFHGVG (185 aa). Residues aspartate 18 and aspartate 116 each coordinate Mg(2+). Glutamate 117 is an active-site residue.

The protein belongs to the DNA polymerase type-Y family. In terms of assembly, monomer. Requires Mg(2+) as cofactor.

It is found in the cytoplasm. It carries out the reaction DNA(n) + a 2'-deoxyribonucleoside 5'-triphosphate = DNA(n+1) + diphosphate. Its function is as follows. Poorly processive, error-prone DNA polymerase involved in untargeted mutagenesis. Copies undamaged DNA at stalled replication forks, which arise in vivo from mismatched or misaligned primer ends. These misaligned primers can be extended by PolIV. Exhibits no 3'-5' exonuclease (proofreading) activity. May be involved in translesional synthesis, in conjunction with the beta clamp from PolIII. The sequence is that of DNA polymerase IV from Streptococcus pyogenes serotype M6 (strain ATCC BAA-946 / MGAS10394).